The sequence spans 722 residues: Formin-like protein 16 (722 aa).

Disordered regions lie at residues 1-56 (MSPV…PMFD), 564-606 (ATED…PSRP), 635-672 (VGSPSPPPPSMSGGAPPPPPPPPMLVASRTAPPPHLSH), and 690-722 (PLLVREGAPPPTLPSMSGGAPPPPPPLPMLRYQ). Positions 22 to 55 (PLPPPPPPPMRRSAPSPPPMSGRVPPPPPPPPMF) are enriched in pro residues. One can recognise an FH2 domain in the interval 182–571 (FRCPVTKRSS…KAATEDVFGG (390 aa)). Pro residues-rich tracts occupy residues 593 to 605 (IRPPPSIPRPPSR), 638 to 658 (PSPPPPSMSGGAPPPPPPPPM), and 709 to 722 (APPPPPPLPMLRYQ).

Belongs to the formin-like family. Class-II subfamily.

The protein is Formin-like protein 16 (FH16) of Arabidopsis thaliana (Mouse-ear cress).